A 335-amino-acid polypeptide reads, in one-letter code: MSLQKCQEEWGELEKEFQQLQETHKVYKQKLEELSSLQNLCSSYINKHKRRLTELKGNLHGYKHTSNLEEKELIQQIDGTIKERHNAFFDMEAYLPKKNSLYLNLVLGNVNVTLLSKQTKFAYKDEYEKFKLYLTIILLLGAITCRFVLHYRVTDEVFNFLLVWYFCTLTIRESILISNGSRIKGWWVSHHYVSTFLSGVMLTWPDGLMYQMFRNQFLAFSIFQSCVQFLQYYYQSGCLYRLRALGERNHLHLTVEGFQSWMWRGLTFLLPVLFFGHFWQLYNAMTLFGLSRHEECKEWQVFVLALTFLLLFLGNFLTTLKVVHTKFQKNKLKKP.

Residues 1-39 are a coiled coil; the sequence is MSLQKCQEEWGELEKEFQQLQETHKVYKQKLEELSSLQN. 6 helical membrane-spanning segments follow: residues 100-116, 130-150, 157-177, 193-213, 268-288, and 300-320; these read SLYL…TLLS, FKLY…FVLH, VFNF…SILI, VSTF…YQMF, FLLP…MTLF, and QVFV…LTTL.

This sequence belongs to the TMEM120 family.

It is found in the nucleus inner membrane. Functionally, necessary for efficient adipogenesis. Does not show ion channel activity. The chain is Transmembrane protein 120B-B (tmem120b-b) from Xenopus laevis (African clawed frog).